Reading from the N-terminus, the 156-residue chain is CKLF-like MARVEL transmembrane domain-containing protein 5 (156 aa).

Positions 29–146 constitute an MARVEL domain; sequence FLSSLKGILL…DAFKIYRTEL (118 aa). 4 consecutive transmembrane segments (helical) span residues 35 to 55, 56 to 76, 93 to 113, and 119 to 139; these read GILL…FTAS, ISAY…FLFL, LDFL…FAAV, and AAIA…YDAF.

This sequence belongs to the chemokine-like factor family.

It localises to the membrane. The sequence is that of CKLF-like MARVEL transmembrane domain-containing protein 5 (Cmtm5) from Mus musculus (Mouse).